The primary structure comprises 467 residues: ESX-4 secretion system protein eccD4 (467 aa).

The next 11 helical transmembrane spans lie at 122 to 142 (GALAASCITAGGGLMLVRNAL), 152 to 172 (ATAGVVAAAGLAALLFAVIAC), 186 to 206 (VIATIFGAVAGLLAVPGVPGV), 209 to 229 (VLVAAMAAAATSVLAMRITGC), 241 to 261 (AVVVAAATLVGAITAAPVPAI), 264 to 284 (LATLASFGLLEVSARMAVLLA), 319 to 339 (LTSLLAAFAASATIGAIGTAV), 344 to 364 (IHRSSMGGIALAAVTGALLLL), 374 to 394 (SLVFAICGITTVATAFTVAAD), 401 to 421 (PWIAALTAMLAAVAMFLGFVA), and 439 to 459 (CLALIAMVPLTAWLCGAYSAV).

It belongs to the EccD/Snm4 family. In terms of assembly, part of the ESX-4 / type VII secretion system (T7SS), which is composed of cytosolic and membrane components.

Its subcellular location is the cell membrane. This chain is ESX-4 secretion system protein eccD4 (eccD4), found in Mycobacterium tuberculosis (strain CDC 1551 / Oshkosh).